Here is a 255-residue protein sequence, read N- to C-terminus: Developmental and secondary metabolism regulator MVE1 (255 aa).

Residues 31–226 (GRKLTYRMSV…AEQGCRVRIR (196 aa)) form the Velvet domain. The short motif at 45 to 50 (VRARAC) is the Nuclear localization signal element. Disordered regions lie at residues 163-184 (CKSP…DAHV) and 229-255 (VRMR…QARA). Over residues 245–255 (NYEDETAQARA) the composition is skewed to acidic residues.

This sequence belongs to the velvet family. VeA subfamily. In terms of assembly, component of the heterotrimeric velvet complex composed of LAE1, MVE1 and VEL2; MVE1 acting as a bridging protein between LAE1 and VEL2.

The protein resides in the nucleus. The protein localises to the cytoplasm. Component of the velvet transcription factor complex that controls sexual/asexual developmental ratio in response to light, promoting sexual development in the darkness while stimulating asexual sporulation under illumination. The velvet complex hat acts as a global regulator for secondary metabolite gene expression. Controls the expression of the melanin gene cluster. Mediates the light-stimulated formation of aerial mycelia. The polypeptide is Developmental and secondary metabolism regulator MVE1 (Zymoseptoria tritici (strain CBS 115943 / IPO323) (Speckled leaf blotch fungus)).